We begin with the raw amino-acid sequence, 73 residues long: Sec-independent protein translocase protein TatA (73 aa).

Residues 1–21 (MGSFSIWHWMIVLVIVLLVFG) traverse the membrane as a helical segment.

This sequence belongs to the TatA/E family. The Tat system comprises two distinct complexes: a TatABC complex, containing multiple copies of TatA, TatB and TatC subunits, and a separate TatA complex, containing only TatA subunits. Substrates initially bind to the TatABC complex, which probably triggers association of the separate TatA complex to form the active translocon.

It is found in the cell inner membrane. Functionally, part of the twin-arginine translocation (Tat) system that transports large folded proteins containing a characteristic twin-arginine motif in their signal peptide across membranes. TatA could form the protein-conducting channel of the Tat system. This chain is Sec-independent protein translocase protein TatA, found in Mesorhizobium japonicum (strain LMG 29417 / CECT 9101 / MAFF 303099) (Mesorhizobium loti (strain MAFF 303099)).